Here is a 1158-residue protein sequence, read N- to C-terminus: Teashirt homolog 1 (1158 aa).

3 disordered regions span residues 70–126 (DDGR…DMDT), 170–228 (INST…ANNG), and 310–341 (TGHY…EMEG). Over residues 76–88 (LSYQNSPLSNGTN) the composition is skewed to polar residues. Composition is skewed to low complexity over residues 186–205 (SHAS…ASAS) and 213–228 (SSNS…ANNG). 2 C2H2-type zinc fingers span residues 288-312 (FRCK…ETGH) and 349-373 (LKCM…KTKH). Positions 310–326 (TGHYRDDNKDKEEDRGK) are enriched in basic and acidic residues. Positions 405–425 (PCSPDSISSTPGIPLAETAPT) are disordered. The C2H2-type 3 zinc finger occupies 461-485 (LKCMECGSSHDTLQQLTAHMMVTGH). Disordered regions lie at residues 516–573 (PPTT…VEKS), 656–681 (LKSL…NHKS), and 693–748 (VTGK…VDKD). Over residues 555 to 573 (EEKKIKQEKEDPSERVEKS) the composition is skewed to basic and acidic residues. A compositionally biased stretch (low complexity) spans 656-671 (LKSLTSDSSTLIHSPS). Composition is skewed to basic and acidic residues over residues 693–716 (VTGK…KHLT) and 724–748 (LKER…VDKD). A DNA-binding region (homeobox) is located at residues 963–1033 (RKGRQSNWNP…NVKYQLRRTG (71 aa)). 2 consecutive C2H2-type zinc fingers follow at residues 1048-1070 (FLCS…LESH) and 1115-1138 (FQCK…SKTH).

The protein belongs to the teashirt C2H2-type zinc-finger protein family.

Its subcellular location is the nucleus. Its function is as follows. Probable transcriptional regulator involved in developmental processes. May act as a transcriptional repressor (Potential). This chain is Teashirt homolog 1 (tshz1), found in Danio rerio (Zebrafish).